The sequence spans 197 residues: Phosphoheptose isomerase (197 aa).

An SIS domain is found at 37-197 (MLQCLMNDGK…CIDSVLLEGM (161 aa)). Position 52–54 (52–54 (NGG)) interacts with substrate. Residues His61 and Glu65 each coordinate Zn(2+). Substrate-binding positions include Glu65, 94-95 (ND), 120-122 (STS), Ser125, and Gln175. The Zn(2+) site is built by Gln175 and His183.

This sequence belongs to the SIS family. GmhA subfamily. As to quaternary structure, homotetramer. Requires Zn(2+) as cofactor.

The protein localises to the cytoplasm. It carries out the reaction 2 D-sedoheptulose 7-phosphate = D-glycero-alpha-D-manno-heptose 7-phosphate + D-glycero-beta-D-manno-heptose 7-phosphate. It functions in the pathway carbohydrate biosynthesis; D-glycero-D-manno-heptose 7-phosphate biosynthesis; D-glycero-alpha-D-manno-heptose 7-phosphate and D-glycero-beta-D-manno-heptose 7-phosphate from sedoheptulose 7-phosphate: step 1/1. Its function is as follows. Catalyzes the isomerization of sedoheptulose 7-phosphate in D-glycero-D-manno-heptose 7-phosphate. This is Phosphoheptose isomerase from Neisseria gonorrhoeae (strain ATCC 700825 / FA 1090).